Consider the following 314-residue polypeptide: Probable serine/threonine-protein kinase WNK11 (314 aa).

The tract at residues 1–22 (MMTCASSDDNESEKDKDSESFV) is disordered. The region spanning 31 to 289 (GRYGELLGSG…AAELLCDPFF (259 aa)) is the Protein kinase domain. 111–114 (TEIC) contributes to the ATP binding site. The active-site Proton acceptor is Asp178. The segment at 295–314 (DDDEDGENNDNNGAGRIVVS) is disordered.

The protein belongs to the protein kinase superfamily. Ser/Thr protein kinase family. WNK subfamily.

The catalysed reaction is L-seryl-[protein] + ATP = O-phospho-L-seryl-[protein] + ADP + H(+). It carries out the reaction L-threonyl-[protein] + ATP = O-phospho-L-threonyl-[protein] + ADP + H(+). Its function is as follows. May regulate flowering time by modulating the photoperiod pathway. This is Probable serine/threonine-protein kinase WNK11 (WNK11) from Arabidopsis thaliana (Mouse-ear cress).